The following is a 576-amino-acid chain: MSEEAAYQEDTAVQNTPADALSPVESDSNSALSTPSNKAERDDMKDFDENHEESNNYVEIPKKPASAYVTVSICCLMVAFGGFVFGWDTGTISGFVAQTDFIRRFGMKHHDGTYYLSKVRTGLMVSIINIGCAIGGIILAKLGDMYGRKMGLIVVVVIYIIGIIIQIASINKWYQYFIGRIISGLGVGGIAVLSPMLISEVSPKHIRGTLVSCYQLMITLGIFLGYCTNYGTKTYTNSVQWRVPLGLGFAWALFMIGGMTFVPESPRYLVEVGKIEEAKRSIALSNKVSADDPAVMAEVEVVQATVEAEKLAGNASWGEIFSTKTKVFQRLIMGAMIQSLQQLTGDNYFFYYGTTVFTAVGLSDSFETSIVLGIVNFASTFVGIFLVERYGRRRCLLWGAASMTACMVVFASVGVTRLWPNGKKNGSSKGAGNCMIVFTCFYLFCFATTWAPIPFVVNSETFPLRVKSKCMAIAQACNWIWGFLIGFFTPFISNAIDFYYGYVFMGCLVFSYFYVFFFVPETKGLTLEEVNTLWEEGVLPWKSPSWVPPNKRGTDYNADDLMHDDQPFYKKMFGKK.

The segment at 1-56 (MSEEAAYQEDTAVQNTPADALSPVESDSNSALSTPSNKAERDDMKDFDENHEESNN) is disordered. Over 1–66 (MSEEAAYQED…YVEIPKKPAS (66 aa)) the chain is Cytoplasmic. A compositionally biased stretch (polar residues) spans 25 to 37 (ESDSNSALSTPSN). Basic and acidic residues predominate over residues 38-54 (KAERDDMKDFDENHEES). Lys-45 is covalently cross-linked (Glycyl lysine isopeptide (Lys-Gly) (interchain with G-Cter in ubiquitin)). The chain crosses the membrane as a helical span at residues 67–87 (AYVTVSICCLMVAFGGFVFGW). At 88–122 (DTGTISGFVAQTDFIRRFGMKHHDGTYYLSKVRTG) the chain is on the extracellular side. A helical membrane pass occupies residues 123–143 (LMVSIINIGCAIGGIILAKLG). Over 144–149 (DMYGRK) the chain is Cytoplasmic. A helical transmembrane segment spans residues 150 to 170 (MGLIVVVVIYIIGIIIQIASI). Residues 171-180 (NKWYQYFIGR) lie on the Extracellular side of the membrane. A helical membrane pass occupies residues 181–201 (IISGLGVGGIAVLSPMLISEV). The Cytoplasmic segment spans residues 202 to 207 (SPKHIR). Residues 208 to 228 (GTLVSCYQLMITLGIFLGYCT) form a helical membrane-spanning segment. At 229–242 (NYGTKTYTNSVQWR) the chain is on the extracellular side. Residues 243–263 (VPLGLGFAWALFMIGGMTFVP) form a helical membrane-spanning segment. Over 264–346 (ESPRYLVEVG…IQSLQQLTGD (83 aa)) the chain is Cytoplasmic. Residues 347–363 (NYFFYYGTTVFTAVGLS) traverse the membrane as a helical segment. At 364 to 369 (DSFETS) the chain is on the extracellular side. A helical transmembrane segment spans residues 370-387 (IVLGIVNFASTFVGIFLV). Topologically, residues 388 to 394 (ERYGRRR) are cytoplasmic. A helical membrane pass occupies residues 395–415 (CLLWGAASMTACMVVFASVGV). The Extracellular segment spans residues 416-437 (TRLWPNGKKNGSSKGAGNCMIV). A glycan (N-linked (GlcNAc...) asparagine) is linked at Asn-425. Residues 438 to 458 (FTCFYLFCFATTWAPIPFVVN) form a helical membrane-spanning segment. Topologically, residues 459 to 475 (SETFPLRVKSKCMAIAQ) are cytoplasmic. The helical transmembrane segment at 476-496 (ACNWIWGFLIGFFTPFISNAI) threads the bilayer. A topological domain (extracellular) is located at residue Asp-497. Residues 498–518 (FYYGYVFMGCLVFSYFYVFFF) form a helical membrane-spanning segment. Residues 519–576 (VPETKGLTLEEVNTLWEEGVLPWKSPSWVPPNKRGTDYNADDLMHDDQPFYKKMFGKK) are Cytoplasmic-facing.

This sequence belongs to the major facilitator superfamily. Sugar transporter (TC 2.A.1.1) family.

Its subcellular location is the cell membrane. Its activity is regulated as follows. Xylose uptake is strongly inhibited by glucose. Its function is as follows. Low-affinity glucose transporter. Can also transport xylose. The protein is Low-affinity glucose transporter HXT4 (HXT4) of Saccharomyces cerevisiae (strain JAY291) (Baker's yeast).